A 346-amino-acid chain; its full sequence is Phenylalanine--tRNA ligase alpha subunit (346 aa).

E264 contacts Mg(2+).

Belongs to the class-II aminoacyl-tRNA synthetase family. Phe-tRNA synthetase alpha subunit type 1 subfamily. As to quaternary structure, tetramer of two alpha and two beta subunits. Mg(2+) serves as cofactor.

The protein localises to the cytoplasm. The enzyme catalyses tRNA(Phe) + L-phenylalanine + ATP = L-phenylalanyl-tRNA(Phe) + AMP + diphosphate + H(+). The sequence is that of Phenylalanine--tRNA ligase alpha subunit from Leifsonia xyli subsp. xyli (strain CTCB07).